A 296-amino-acid polypeptide reads, in one-letter code: Light-independent protochlorophyllide reductase iron-sulfur ATP-binding protein (296 aa).

ATP contacts are provided by residues 10–15 (GIGKST) and K39. S14 serves as a coordination point for Mg(2+). Residues C95 and C129 each coordinate [4Fe-4S] cluster. 180–181 (NR) contributes to the ATP binding site.

It belongs to the NifH/BchL/ChlL family. In terms of assembly, homodimer. Protochlorophyllide reductase is composed of three subunits; ChlL, ChlN and ChlB. [4Fe-4S] cluster serves as cofactor.

The protein localises to the plastid. Its subcellular location is the chloroplast. It catalyses the reaction chlorophyllide a + oxidized 2[4Fe-4S]-[ferredoxin] + 2 ADP + 2 phosphate = protochlorophyllide a + reduced 2[4Fe-4S]-[ferredoxin] + 2 ATP + 2 H2O. The protein operates within porphyrin-containing compound metabolism; chlorophyll biosynthesis (light-independent). In terms of biological role, component of the dark-operative protochlorophyllide reductase (DPOR) that uses Mg-ATP and reduced ferredoxin to reduce ring D of protochlorophyllide (Pchlide) to form chlorophyllide a (Chlide). This reaction is light-independent. The L component serves as a unique electron donor to the NB-component of the complex, and binds Mg-ATP. This is Light-independent protochlorophyllide reductase iron-sulfur ATP-binding protein from Mesostigma viride (Green alga).